Here is a 145-residue protein sequence, read N- to C-terminus: D-aminoacyl-tRNA deacylase (145 aa).

A Gly-cisPro motif, important for rejection of L-amino acids motif is present at residues 137–138; sequence GP.

The protein belongs to the DTD family. As to quaternary structure, homodimer.

The protein localises to the cytoplasm. It carries out the reaction glycyl-tRNA(Ala) + H2O = tRNA(Ala) + glycine + H(+). The catalysed reaction is a D-aminoacyl-tRNA + H2O = a tRNA + a D-alpha-amino acid + H(+). Its function is as follows. An aminoacyl-tRNA editing enzyme that deacylates mischarged D-aminoacyl-tRNAs. Also deacylates mischarged glycyl-tRNA(Ala), protecting cells against glycine mischarging by AlaRS. Acts via tRNA-based rather than protein-based catalysis; rejects L-amino acids rather than detecting D-amino acids in the active site. By recycling D-aminoacyl-tRNA to D-amino acids and free tRNA molecules, this enzyme counteracts the toxicity associated with the formation of D-aminoacyl-tRNA entities in vivo and helps enforce protein L-homochirality. This is D-aminoacyl-tRNA deacylase from Dichelobacter nodosus (strain VCS1703A).